The following is a 347-amino-acid chain: MSAQNPVLTPEKRGEDVDSALRPQTLDDFTGQAEARANLKIFIEAAKNRGEALDHVLFVGPPGLGKTTLAQIMAKELGVNFRSTSGPVIAKAGDLAALLTNLEERDVLFIDEIHRLSPAVEEILYPAMEDFQLDLIIGEGPAARSVKIDLSKFTLVAATTRLGLLTTPLRDRFGIPVRLSFYTVEELELIVRRGARLMGLGMTDDGAREIARRARGTPRIAGRLLRRVRDFAEVARAPAVTREIADEALTRLLVDNMGLDQLDTRYLTMIAVNFGGGPVGIETIAAGLSEPRDAIEDIIEPYMIQQGFIQRTPRGRVLTAIAWKHLGLMPPKDMEAAQFRLTLEDDD.

The large ATPase domain (RuvB-L) stretch occupies residues 1-182 (MSAQNPVLTP…FGIPVRLSFY (182 aa)). Residues Leu-21, Arg-22, Gly-63, Lys-66, Thr-67, Thr-68, 129–131 (EDF), Arg-172, Tyr-182, and Arg-219 contribute to the ATP site. Thr-67 lines the Mg(2+) pocket. A small ATPAse domain (RuvB-S) region spans residues 183–253 (TVEELELIVR…IADEALTRLL (71 aa)). A head domain (RuvB-H) region spans residues 256-347 (NMGLDQLDTR…QFRLTLEDDD (92 aa)). Residues Arg-292, Arg-311, and Arg-316 each contribute to the DNA site.

The protein belongs to the RuvB family. In terms of assembly, homohexamer. Forms an RuvA(8)-RuvB(12)-Holliday junction (HJ) complex. HJ DNA is sandwiched between 2 RuvA tetramers; dsDNA enters through RuvA and exits via RuvB. An RuvB hexamer assembles on each DNA strand where it exits the tetramer. Each RuvB hexamer is contacted by two RuvA subunits (via domain III) on 2 adjacent RuvB subunits; this complex drives branch migration. In the full resolvosome a probable DNA-RuvA(4)-RuvB(12)-RuvC(2) complex forms which resolves the HJ.

Its subcellular location is the cytoplasm. It carries out the reaction ATP + H2O = ADP + phosphate + H(+). Its function is as follows. The RuvA-RuvB-RuvC complex processes Holliday junction (HJ) DNA during genetic recombination and DNA repair, while the RuvA-RuvB complex plays an important role in the rescue of blocked DNA replication forks via replication fork reversal (RFR). RuvA specifically binds to HJ cruciform DNA, conferring on it an open structure. The RuvB hexamer acts as an ATP-dependent pump, pulling dsDNA into and through the RuvAB complex. RuvB forms 2 homohexamers on either side of HJ DNA bound by 1 or 2 RuvA tetramers; 4 subunits per hexamer contact DNA at a time. Coordinated motions by a converter formed by DNA-disengaged RuvB subunits stimulates ATP hydrolysis and nucleotide exchange. Immobilization of the converter enables RuvB to convert the ATP-contained energy into a lever motion, pulling 2 nucleotides of DNA out of the RuvA tetramer per ATP hydrolyzed, thus driving DNA branch migration. The RuvB motors rotate together with the DNA substrate, which together with the progressing nucleotide cycle form the mechanistic basis for DNA recombination by continuous HJ branch migration. Branch migration allows RuvC to scan DNA until it finds its consensus sequence, where it cleaves and resolves cruciform DNA. The protein is Holliday junction branch migration complex subunit RuvB of Allorhizobium ampelinum (strain ATCC BAA-846 / DSM 112012 / S4) (Agrobacterium vitis (strain S4)).